Consider the following 201-residue polypeptide: dTTP/UTP pyrophosphatase (201 aa).

Catalysis depends on D80, which acts as the Proton acceptor.

It belongs to the Maf family. YhdE subfamily. A divalent metal cation is required as a cofactor.

It localises to the cytoplasm. It catalyses the reaction dTTP + H2O = dTMP + diphosphate + H(+). The catalysed reaction is UTP + H2O = UMP + diphosphate + H(+). In terms of biological role, nucleoside triphosphate pyrophosphatase that hydrolyzes dTTP and UTP. May have a dual role in cell division arrest and in preventing the incorporation of modified nucleotides into cellular nucleic acids. This Novosphingobium aromaticivorans (strain ATCC 700278 / DSM 12444 / CCUG 56034 / CIP 105152 / NBRC 16084 / F199) protein is dTTP/UTP pyrophosphatase.